The following is a 342-amino-acid chain: GTPase Obg (342 aa).

One can recognise an Obg domain in the interval 1–159; the sequence is MKFLDEAKVY…MWIWLRLKLI (159 aa). The region spanning 160–327 is the OBG-type G domain; sequence ADAGLVGLPN…ALRALQTEID (168 aa). GTP is bound by residues 166-173, 191-195, 212-215, 279-282, and 308-310; these read GLPNAGKS, FTTLH, DIPG, SKAD, and SSA. Mg(2+)-binding residues include Ser173 and Thr193.

The protein belongs to the TRAFAC class OBG-HflX-like GTPase superfamily. OBG GTPase family. As to quaternary structure, monomer. The cofactor is Mg(2+).

It is found in the cytoplasm. In terms of biological role, an essential GTPase which binds GTP, GDP and possibly (p)ppGpp with moderate affinity, with high nucleotide exchange rates and a fairly low GTP hydrolysis rate. Plays a role in control of the cell cycle, stress response, ribosome biogenesis and in those bacteria that undergo differentiation, in morphogenesis control. The protein is GTPase Obg of Methylobacterium radiotolerans (strain ATCC 27329 / DSM 1819 / JCM 2831 / NBRC 15690 / NCIMB 10815 / 0-1).